A 444-amino-acid chain; its full sequence is Trigger factor (444 aa).

The PPIase FKBP-type domain maps to 161–246 (GDRVVIDFKG…VQKVEGQKLP (86 aa)).

Belongs to the FKBP-type PPIase family. Tig subfamily.

The protein localises to the cytoplasm. It catalyses the reaction [protein]-peptidylproline (omega=180) = [protein]-peptidylproline (omega=0). Involved in protein export. Acts as a chaperone by maintaining the newly synthesized protein in an open conformation. Functions as a peptidyl-prolyl cis-trans isomerase. The sequence is that of Trigger factor from Saccharophagus degradans (strain 2-40 / ATCC 43961 / DSM 17024).